Reading from the N-terminus, the 30-residue chain is Cycloviolacin-O4 (30 aa).

The cyclopeptide (Gly-Asn) cross-link spans 1–30 (GIPCGESCVWIPCISSAIGCSCKNKVCYRN). Disulfide bonds link C4-C20, C8-C22, and C13-C27.

Post-translationally, this is a cyclic peptide. Expressed in petals, petioles, roots and runners but not in leaves (at protein level).

Probably participates in a plant defense mechanism. This chain is Cycloviolacin-O4, found in Viola odorata (Sweet violet).